The chain runs to 219 residues: tRNA (guanine-N(7)-)-methyltransferase (219 aa).

S-adenosyl-L-methionine contacts are provided by Glu-43, Asp-68, Glu-101, and Asn-124. Substrate-binding residues include Lys-128 and Asp-160.

Belongs to the class I-like SAM-binding methyltransferase superfamily. TrmB family.

It carries out the reaction guanosine(46) in tRNA + S-adenosyl-L-methionine = N(7)-methylguanosine(46) in tRNA + S-adenosyl-L-homocysteine. It functions in the pathway tRNA modification; N(7)-methylguanine-tRNA biosynthesis. Catalyzes the formation of N(7)-methylguanine at position 46 (m7G46) in tRNA. The protein is tRNA (guanine-N(7)-)-methyltransferase of Clostridium beijerinckii (strain ATCC 51743 / NCIMB 8052) (Clostridium acetobutylicum).